We begin with the raw amino-acid sequence, 319 residues long: Acetyl esterase (319 aa).

The short motif at 91–93 (HGG) is the Involved in the stabilization of the negatively charged intermediate by the formation of the oxyanion hole element. Residues Ser165, Asp262, and His292 contribute to the active site.

The protein belongs to the 'GDXG' lipolytic enzyme family. As to quaternary structure, homodimer. Interacts with MalT and MelA.

The protein resides in the cytoplasm. Displays esterase activity towards short chain fatty esters (acyl chain length of up to 8 carbons). Able to hydrolyze triacetylglycerol (triacetin) and tributyrylglycerol (tributyrin), but not trioleylglycerol (triolein) or cholesterol oleate. Negatively regulates MalT activity by antagonizing maltotriose binding. Inhibits MelA galactosidase activity. In Escherichia coli (strain ATCC 8739 / DSM 1576 / NBRC 3972 / NCIMB 8545 / WDCM 00012 / Crooks), this protein is Acetyl esterase.